Consider the following 636-residue polypeptide: 1-deoxy-D-xylulose-5-phosphate synthase (636 aa).

Thiamine diphosphate contacts are provided by residues His72 and 113-115; that span reads GHA. Residue Asp144 coordinates Mg(2+). Residues 145-146, Asn174, Tyr287, and Glu370 contribute to the thiamine diphosphate site; that span reads GS. Asn174 contributes to the Mg(2+) binding site.

Belongs to the transketolase family. DXPS subfamily. As to quaternary structure, homodimer. Mg(2+) serves as cofactor. Requires thiamine diphosphate as cofactor.

It catalyses the reaction D-glyceraldehyde 3-phosphate + pyruvate + H(+) = 1-deoxy-D-xylulose 5-phosphate + CO2. It functions in the pathway metabolic intermediate biosynthesis; 1-deoxy-D-xylulose 5-phosphate biosynthesis; 1-deoxy-D-xylulose 5-phosphate from D-glyceraldehyde 3-phosphate and pyruvate: step 1/1. Catalyzes the acyloin condensation reaction between C atoms 2 and 3 of pyruvate and glyceraldehyde 3-phosphate to yield 1-deoxy-D-xylulose-5-phosphate (DXP). This is 1-deoxy-D-xylulose-5-phosphate synthase from Synechococcus elongatus (strain ATCC 33912 / PCC 7942 / FACHB-805) (Anacystis nidulans R2).